Here is a 190-residue protein sequence, read N- to C-terminus: MELLKKRILEDGNVFGEDVLKVDSFLNHQIDVKLLNEIGKEFKRRFENKEITKILTIEASGIGIACIAAQYFNVPVVFAKKHQGSNMDENTYESEVFSFTKNKSYKVRVSKKYINTEDKVLIIDDFLANGNAACGLIDIVREANGEVQGVGIVIEKGFQNGRKTIENKGVTVESLAIVESMKNGKVIFKN.

Xanthine is bound by residues L20 and N27. Residue 128-132 (ANGNA) coordinates 5-phospho-alpha-D-ribose 1-diphosphate. K156 provides a ligand contact to xanthine.

The protein belongs to the purine/pyrimidine phosphoribosyltransferase family. Xpt subfamily. As to quaternary structure, homodimer.

The protein resides in the cytoplasm. It carries out the reaction XMP + diphosphate = xanthine + 5-phospho-alpha-D-ribose 1-diphosphate. It participates in purine metabolism; XMP biosynthesis via salvage pathway; XMP from xanthine: step 1/1. Its function is as follows. Converts the preformed base xanthine, a product of nucleic acid breakdown, to xanthosine 5'-monophosphate (XMP), so it can be reused for RNA or DNA synthesis. The protein is Xanthine phosphoribosyltransferase of Clostridium novyi (strain NT).